The chain runs to 335 residues: Calcium-binding protein TgpCaBP (335 aa).

A helical membrane pass occupies residues 30 to 50 (LPLCVFSLFLFSFAFSALSGA). EF-hand domains follow at residues 113 to 148 (MHQH…SLDQ), 153 to 188 (QHKK…GKDE), 190 to 225 (LMKI…GSLN), and 227 to 262 (VEKT…PHSH). Ca(2+) is bound by residues D126, D128, D130, K132, E137, D166, D168, D170, E177, D203, N205, D207, K209, E214, D240, N242, D244, and E251. A Prevents secretion from ER motif is present at residues 332 to 335 (HDEL).

The protein resides in the endoplasmic reticulum membrane. Its subcellular location is the cytoplasm. The protein localises to the cytosol. Functionally, calcium-binding protein. Participates in the efflux of intracellular Ca(2+) and storage of Ca(2+) in the endoplasmic reticulum. Required for gliding, host cell invasion and egress. Required for microneme secretion. This is Calcium-binding protein TgpCaBP from Toxoplasma gondii.